Consider the following 276-residue polypeptide: Large ribosomal subunit protein uL2 (276 aa).

Disordered regions lie at residues 35–58 (RKLSKTGGRNSYGRMTSRHRGGGH) and 218–276 (RPIT…KNRK). Basic residues predominate over residues 255-276 (RRPKKASNKMIVRRRPNGKNRK).

It belongs to the universal ribosomal protein uL2 family. In terms of assembly, part of the 50S ribosomal subunit. Forms a bridge to the 30S subunit in the 70S ribosome.

Functionally, one of the primary rRNA binding proteins. Required for association of the 30S and 50S subunits to form the 70S ribosome, for tRNA binding and peptide bond formation. It has been suggested to have peptidyltransferase activity; this is somewhat controversial. Makes several contacts with the 16S rRNA in the 70S ribosome. The protein is Large ribosomal subunit protein uL2 of Bifidobacterium adolescentis (strain ATCC 15703 / DSM 20083 / NCTC 11814 / E194a).